We begin with the raw amino-acid sequence, 229 residues long: Demethylmenaquinone methyltransferase (229 aa).

S-adenosyl-L-methionine is bound by residues T57, D77, and 101-102 (DV).

This sequence belongs to the class I-like SAM-binding methyltransferase superfamily. MenG/UbiE family.

The catalysed reaction is a 2-demethylmenaquinol + S-adenosyl-L-methionine = a menaquinol + S-adenosyl-L-homocysteine + H(+). The protein operates within quinol/quinone metabolism; menaquinone biosynthesis; menaquinol from 1,4-dihydroxy-2-naphthoate: step 2/2. In terms of biological role, methyltransferase required for the conversion of demethylmenaquinol (DMKH2) to menaquinol (MKH2). This is Demethylmenaquinone methyltransferase from Chlamydia muridarum (strain MoPn / Nigg).